The chain runs to 872 residues: Alanine--tRNA ligase (872 aa).

Residues His563, His567, Cys665, and His669 each coordinate Zn(2+).

The protein belongs to the class-II aminoacyl-tRNA synthetase family. The cofactor is Zn(2+).

The protein resides in the cytoplasm. It carries out the reaction tRNA(Ala) + L-alanine + ATP = L-alanyl-tRNA(Ala) + AMP + diphosphate. Its function is as follows. Catalyzes the attachment of alanine to tRNA(Ala) in a two-step reaction: alanine is first activated by ATP to form Ala-AMP and then transferred to the acceptor end of tRNA(Ala). Also edits incorrectly charged Ser-tRNA(Ala) and Gly-tRNA(Ala) via its editing domain. In Bacteroides fragilis (strain YCH46), this protein is Alanine--tRNA ligase.